Consider the following 480-residue polypeptide: Pre-glycoprotein polyprotein GP complex (480 aa).

Gly2 carries the N-myristoyl glycine; by host lipid modification. The Extracellular portion of the chain corresponds to 2 to 17 (GQLVSFFQEIPVFFQE). A helical transmembrane segment spans residues 18–33 (ALNIALAVVTLLAIVK). Residues 34–58 (GVLNLWKSGLFQLLMFLILAGRSCS) lie on the Cytoplasmic side of the membrane. Position 57 (Cys57) interacts with Zn(2+). Residues 59-419 (FRIGYHTSFE…QGRTPLTLVD (361 aa)) lie on the Extracellular side of the membrane. Intrachain disulfides connect Cys85-Cys221, Cys266-Cys279, Cys288-Cys297, and Cys351-Cys372. N-linked (GlcNAc...) asparagine; by host glycans are attached at residues Asn88, Asn174, and Asn214. N-linked (GlcNAc...) asparagine; by host glycans are attached at residues Asn352, Asn360, Asn377, and Asn382. The helical transmembrane segment at 420 to 440 (LCFWSAVFYTTTLFLHLVGFP) threads the bilayer. The Cytoplasmic portion of the chain corresponds to 441–480 (THRHISGEPCPLPHRLNRHGACNCGRFKRLKKPLVWYKHH). Positions 442, 444, 450, 454, 462, 464, and 480 each coordinate Zn(2+).

This sequence belongs to the arenaviridae GPC protein family. In terms of assembly, interacts with glycoprotein G2. Part of the GP complex (GP-C) together with glycoprotein G1 and glycoprotein G2. The GP-complex interacts with protein Z, which interacts with ribonucleocapsid; these interactions may induce virion budding. Homotrimer; disulfide-linked. In pre-fusion state, G1 homotrimers bind G2 homotrimers via ionic interactions. Part of the GP complex (GP-C) together with glycoprotein G2 and the stable signal peptide. The GP-complex interacts with protein Z, which interacts with ribonucleocapsid; these interactions may induce virion budding. As to quaternary structure, homotrimer. Interacts with the stable signal peptide. In pre-fusion state, G2 homotrimers bind G1 homotrimers via ionic interactions. Part of the GP complex (GP-C) together with glycoprotein G1 and the stable signal peptide. Acidification in the endosome triggers rearrangements, which ultimately leads to a 6 helix bundle formed by the two heptad repeat domains (HR1 and HR2) in post-fusion state. The GP-complex interacts with protein Z, which interacts with ribonucleocapsid; these interactions may induce virion budding. In terms of processing, specific enzymatic cleavages in vivo yield mature proteins. GP-C polyprotein is cleaved in the endoplasmic reticulum by the host protease MBTPS1. Only cleaved glycoprotein is incorporated into virions. The SSP remains stably associated with the GP complex following cleavage by signal peptidase and plays crucial roles in the trafficking of GP through the secretory pathway. Post-translationally, myristoylation is necessary for GP2-mediated fusion activity.

The protein resides in the virion membrane. The protein localises to the host endoplasmic reticulum membrane. It localises to the host Golgi apparatus membrane. It is found in the host cell membrane. In terms of biological role, functions as a cleaved signal peptide that is retained as the third component of the GP complex (GP-C). Helps to stabilize the spike complex in its native conformation. The SSP is required for efficient glycoprotein expression, post-translational maturation cleavage of G1 and G2, glycoprotein transport to the cell surface plasma membrane, formation of infectious virus particles, and acid pH-dependent glycoprotein-mediated cell fusion. Its function is as follows. Forms the virion spikes together with glycoprotein G2. The glycoprotein spike trimers are connected to the underlying matrix. Interacts with the host receptor leading to virus endocytosis. Forms the virion spikes together with glycoprotein G1. The glycoprotein spike trimers are connected to the underlying matrix. Class I viral fusion protein that directs fusion of viral and host endosomal membranes, leading to delivery of the nucleocapsid into the cytoplasm. Membrane fusion is mediated by irreversible conformational changes induced by acidification. This chain is Pre-glycoprotein polyprotein GP complex, found in Cupixi mammarenavirus (isolate Rat/Brasil/BeAn 119303/1970) (CPXV).